Consider the following 1481-residue polypeptide: Cystic fibrosis transmembrane conductance regulator (1481 aa).

Residues 1-77 (MQRSPLEKAS…KLINALRRCF (77 aa)) lie on the Cytoplasmic side of the membrane. A helical transmembrane segment spans residues 78–98 (FWRFTFYGILLYLGEVTKAVQ). The region spanning 81–365 (FTFYGILLYL…WAVQTWYDSL (285 aa)) is the ABC transmembrane type-1 1 domain. Over 99–122 (PLLLGRIIASYDPDNKTERSIAIY) the chain is Extracellular. A helical membrane pass occupies residues 123 to 146 (LGIGLCLLFIVRTLLLHPAIFGLH). Residues 147-195 (HIGMQMRIAMFSLIYKKTLKLSSRVLDKISIGQLVSLLSNNLNKFDEGL) are Cytoplasmic-facing. The helical transmembrane segment at 196 to 216 (ALAHFVWIAPLQVALLMGLIW) threads the bilayer. Over 217–222 (ELLQAS) the chain is Extracellular. A helical transmembrane segment spans residues 223 to 243 (AFCGLGFLIVLALFQAGLGRM). The Cytoplasmic portion of the chain corresponds to 244-298 (MMKYRDQRAGKINERLVITSEMIENIQSVKAYCWEEAMEKMIENLRQTELKLTRK). Residues 299–319 (AAYVRYFNSSAFFFSGFFVVF) form a helical membrane-spanning segment. At 320-339 (LSVLPYALIKGIILRKIFTT) the chain is on the extracellular side. A helical membrane pass occupies residues 340 to 358 (ISFCIVLRMAVTRQFPWAV). Residues 359–858 (QTWYDSLGAI…YLRYITLHKS (500 aa)) lie on the Cytoplasmic side of the membrane. Residues W401, S434, 458 to 465 (GSTGAGKT), and Q493 contribute to the ATP site. Positions 423–646 (NDDNNLFFSN…RPDFSSKLMG (224 aa)) constitute an ABC transporter 1 domain. A lipid anchor (S-palmitoyl cysteine) is attached at C524. S549 and S660 each carry phosphoserine. The disordered R region stretch occupies residues 654-831 (SSERRNSILT…EEINEEDLKE (178 aa)). The residue at position 670 (S670) is a Phosphoserine; by PKA. Residue S686 is modified to Phosphoserine. Residue K688 forms a Glycyl lysine isopeptide (Lys-Gly) (interchain with G-Cter in ubiquitin) linkage. Phosphoserine is present on residues S700 and S712. T717 bears the Phosphothreonine mark. A phosphoserine mark is found at S737, S753, S768, S790, S795, and S813. A helical membrane pass occupies residues 859–879 (LIFVLIWCLVIFLAEVAASLV). An ABC transmembrane type-1 2 domain is found at 859-1155 (LIFVLIWCLV…AVNSSIDVDS (297 aa)). Residues 880-918 (VLWLLRNTPFQDKGNSTYSRNNSYAVIITNTSSYYVFYI) are Extracellular-facing. Residues N894, N900, and N909 are each glycosylated (N-linked (GlcNAc...) asparagine). The chain crosses the membrane as a discontinuously helical span at residues 919–939 (YVGVADTLLALGFFRGLPLVH). Topologically, residues 940–990 (TLITVSKILHHKMLHSVLQAPMSTLNTLKAGGILNRFSKDIAILDDLLPLT) are cytoplasmic. Residues 991 to 1011 (IFDFIQLLLIVIGAIAVVSVL) form a helical membrane-spanning segment. Over 1012-1013 (QP) the chain is Extracellular. A helical membrane pass occupies residues 1014-1034 (YIFLATVPVIAAFVLLRAYFL). The Cytoplasmic portion of the chain corresponds to 1035–1095 (QTSQQLKQLE…TANWFLYLST (61 aa)). Residues 1096–1116 (LRWFQMRIEMIFVIFFIAVTF) traverse the membrane as a helical segment. The Extracellular portion of the chain corresponds to 1117–1130 (ISILTTGEGEGTVG). A helical membrane pass occupies residues 1131–1151 (IILTLAMNIMSTLQWAVNSSI). At 1152-1481 (DVDSLMRSVS…TEEEVQETRL (330 aa)) the chain is on the cytoplasmic side. The 234-residue stretch at 1211-1444 (MTIKDLTAKY…KSLFRQAISH (234 aa)) folds into the ABC transporter 2 domain. ATP contacts are provided by residues Y1220 and 1245–1252 (GRTGSGKS). Residues 1387–1481 (RALKQAFADC…TEEEVQETRL (95 aa)) are interaction with GORASP2. C1396 carries S-palmitoyl cysteine lipidation. A phosphoserine mark is found at S1445 and S1457. Residues 1453–1481 (HRNSSKYKSRPQIASLKEETEEEVQETRL) are disordered. Positions 1471 to 1481 (ETEEEVQETRL) are enriched in acidic residues. The short motif at 1479-1481 (TRL) is the PDZ-binding element.

It belongs to the ABC transporter superfamily. ABCC family. CFTR transporter (TC 3.A.1.202) subfamily. As to quaternary structure, monomer; does not require oligomerization for channel activity. May form oligomers in the membrane. Interacts with SLC26A3, SLC26A6 and NHERF1. Interacts with SHANK2. Interacts with MYO6. Interacts (via C-terminus) with GOPC (via PDZ domain); this promotes CFTR internalization and thereby decreases channel activity. Interacts with SLC4A7 through NHERF1. Found in a complex with MYO5B and RAB11A. Interacts with ANO1. Interacts with SLC26A8. Interacts with AHCYL1; the interaction increases CFTR activity. Interacts with CSE1L. The core-glycosylated form interacts with GORASP2 (via PDZ GRASP-type 1 domain) in respone to ER stress. Interacts with MARCHF2; the interaction leads to CFTR ubiqtuitination and degradation. Interacts with ADGRG2. In terms of processing, N-glycosylated. Phosphorylated; cAMP treatment promotes phosphorylation and activates the channel. Dephosphorylation decreases the ATPase activity (in vitro). Phosphorylation at PKA sites activates the channel. Phosphorylation at PKC sites enhances the response to phosphorylation by PKA. Phosphorylated by AMPK; this inhibits channel activity. Post-translationally, ubiquitinated, leading to its degradation in the lysosome. Deubiquitination by USP10 in early endosomes enhances its endocytic recycling to the cell membrane. Ubiquitinated by RNF185 during ER stress. Ubiquitinated by MARCHF2.

The protein localises to the apical cell membrane. It is found in the early endosome membrane. The protein resides in the cell membrane. Its subcellular location is the recycling endosome membrane. It localises to the endoplasmic reticulum membrane. The protein localises to the nucleus. The catalysed reaction is ATP + H2O + closed Cl(-) channel = ADP + phosphate + open Cl(-) channel.. It catalyses the reaction chloride(in) = chloride(out). The enzyme catalyses hydrogencarbonate(in) = hydrogencarbonate(out). It carries out the reaction ATP + H2O = ADP + phosphate + H(+). Epithelial ion channel that plays an important role in the regulation of epithelial ion and water transport and fluid homeostasis. Mediates the transport of chloride ions across the cell membrane. Possesses an intrinsic ATPase activity and utilizes ATP to gate its channel; the passive flow of anions through the channel is gated by cycles of ATP binding and hydrolysis by the ATP-binding domains. The ion channel is also permeable to HCO(3)(-); selectivity depends on the extracellular chloride concentration. Exerts its function also by modulating the activity of other ion channels and transporters. Contributes to the regulation of the pH and the ion content of the epithelial fluid layer. Modulates the activity of the epithelial sodium channel (ENaC) complex, in part by regulating the cell surface expression of the ENaC complex. May regulate bicarbonate secretion and salvage in epithelial cells by regulating the transporter SLC4A7. Can inhibit the chloride channel activity of ANO1. Plays a role in the chloride and bicarbonate homeostasis during sperm epididymal maturation and capacitation. In Callithrix jacchus (White-tufted-ear marmoset), this protein is Cystic fibrosis transmembrane conductance regulator.